A 256-amino-acid polypeptide reads, in one-letter code: MFKRKKNAGQKRTTIIDSDSSSEGSGDESALSSAFKRRKNDTQKRTTPTSVATSTKVRAPSFSSTIDHSHSRNLSKTDEATKETILYAKDDSDDSQKLSKGPYKVPFSKPTTTTTVGLKASSNIKSTTSQDYQPDVCKDYKLTGFCGYGDSCKFLHMREDYKAGWQIEREWEIKNREDDPPRDAGGVSRDADTATSRADSGIPDTCPICQGEFKSPVVTQCCHYFCEKCFLAKHKKKQNCFVCGKNTNGVCKPFKR.

The disordered stretch occupies residues 1–80 (MFKRKKNAGQ…SRNLSKTDEA (80 aa)). Residues 18 to 34 (SDSSSEGSGDESALSSA) are compositionally biased toward low complexity. Residues 45–66 (RTTPTSVATSTKVRAPSFSSTI) are compositionally biased toward polar residues. Residues 67-80 (DHSHSRNLSKTDEA) show a composition bias toward basic and acidic residues. Residues 131–159 (DYQPDVCKDYKLTGFCGYGDSCKFLHMRE) form a C3H1-type zinc finger. The segment covering 173-182 (IKNREDDPPR) has biased composition (basic and acidic residues). The disordered stretch occupies residues 173–200 (IKNREDDPPRDAGGVSRDADTATSRADS). The segment at 206–244 (CPICQGEFKSPVVTQCCHYFCEKCFLAKHKKKQNCFVCG) adopts an RING-type zinc-finger fold.

Belongs to the CWC24 family. In terms of assembly, associated with the spliceosome.

It is found in the nucleus. In terms of biological role, involved in pre-mRNA splicing. The sequence is that of Pre-mRNA-splicing factor CWC24 (CWC24) from Yarrowia lipolytica (strain CLIB 122 / E 150) (Yeast).